The following is a 149-amino-acid chain: Calmodulin (149 aa).

Position 2 is an N-acetylalanine (A2). EF-hand domains follow at residues 8-43 (EQIA…LGQN), 44-79 (PTEA…KMKD), 81-116 (DSEE…LGEK), and 117-149 (LTDE…MMAK). Ca(2+)-binding residues include D21, D23, D25, C27, E32, D57, D59, N61, T63, E68, D94, D96, N98, and E105. An N6,N6,N6-trimethyllysine modification is found at K116. Positions 130, 132, 134, 136, and 141 each coordinate Ca(2+).

The protein belongs to the calmodulin family. Post-translationally, the N-terminus is blocked.

In terms of biological role, calmodulin mediates the control of a large number of enzymes, ion channels and other proteins by Ca(2+). Among the enzymes to be stimulated by the calmodulin-Ca(2+) complex are a number of protein kinases and phosphatases. The protein is Calmodulin of Spinacia oleracea (Spinach).